The following is a 337-amino-acid chain: Terpene synthase 4 (337 aa).

Residues Asp94 and Asp98 each contribute to the Mg(2+) site. The D(D/E)XX(D/E) motif signature appears at 94–98 (DDIFD). Position 195 (Arg195) interacts with substrate. The Mg(2+) site is built by Asn241, Ser245, and Glu249. Positions 241-249 (NDIYSYHRE) match the NSE motif motif. Residues 320–327 (WSESCTRY) carry the WxxxxxRY motif motif.

Belongs to the terpene synthase family. Mg(2+) is required as a cofactor.

It carries out the reaction (2E,6E)-farnesyl diphosphate = alpha-muurolene + diphosphate. The enzyme catalyses (2E,6E)-farnesyl diphosphate = (-)-(E)-beta-caryophyllene + diphosphate. Functionally, terpene synthase that catalyzes the cyclization of farnesyl diphosphate (FPP) into alpha-muurolene, (-)-beta-caryophyllene, and one unidentified sesquiterpene. TPS4 shows only trace monoterpene synthase activity with geranyl diphosphate (GPP) as substrate and produces very small amounts of myrcene. P.polycephalum has a unique biology and these volatile terpenoids could function in internal communication of P.polycephalum, to mark the territory that have been explored, or they may be involved in chemotaxis. This chain is Terpene synthase 4, found in Physarum polycephalum (Slime mold).